Reading from the N-terminus, the 631-residue chain is 1-deoxy-D-xylulose-5-phosphate synthase (631 aa).

Thiamine diphosphate contacts are provided by residues histidine 73 and 114–116 (SHA). Aspartate 145 is a binding site for Mg(2+). Residues 146–147 (GA), asparagine 175, tyrosine 286, and glutamate 368 each bind thiamine diphosphate. Asparagine 175 provides a ligand contact to Mg(2+).

Belongs to the transketolase family. DXPS subfamily. Homodimer. It depends on Mg(2+) as a cofactor. Thiamine diphosphate serves as cofactor.

It catalyses the reaction D-glyceraldehyde 3-phosphate + pyruvate + H(+) = 1-deoxy-D-xylulose 5-phosphate + CO2. The protein operates within metabolic intermediate biosynthesis; 1-deoxy-D-xylulose 5-phosphate biosynthesis; 1-deoxy-D-xylulose 5-phosphate from D-glyceraldehyde 3-phosphate and pyruvate: step 1/1. Its function is as follows. Catalyzes the acyloin condensation reaction between C atoms 2 and 3 of pyruvate and glyceraldehyde 3-phosphate to yield 1-deoxy-D-xylulose-5-phosphate (DXP). This is 1-deoxy-D-xylulose-5-phosphate synthase from Nocardia farcinica (strain IFM 10152).